We begin with the raw amino-acid sequence, 422 residues long: Histidinol dehydrogenase (422 aa).

The NAD(+) site is built by tyrosine 123, glutamine 183, and asparagine 206. Residues serine 229, glutamine 251, and histidine 254 each coordinate substrate. Residues glutamine 251 and histidine 254 each contribute to the Zn(2+) site. Catalysis depends on proton acceptor residues glutamate 320 and histidine 321. Positions 321, 354, 408, and 413 each coordinate substrate. Position 354 (aspartate 354) interacts with Zn(2+). Histidine 413 contacts Zn(2+).

The protein belongs to the histidinol dehydrogenase family. The cofactor is Zn(2+).

The enzyme catalyses L-histidinol + 2 NAD(+) + H2O = L-histidine + 2 NADH + 3 H(+). The protein operates within amino-acid biosynthesis; L-histidine biosynthesis; L-histidine from 5-phospho-alpha-D-ribose 1-diphosphate: step 9/9. Its function is as follows. Catalyzes the sequential NAD-dependent oxidations of L-histidinol to L-histidinaldehyde and then to L-histidine. The polypeptide is Histidinol dehydrogenase (Haloarcula marismortui (strain ATCC 43049 / DSM 3752 / JCM 8966 / VKM B-1809) (Halobacterium marismortui)).